Consider the following 20-residue polypeptide: Collagenolytic protease 36 kDa A (20 aa).

The 20-residue stretch at 1–20 (IVGGTEVTPGEIPYQLSLQD) folds into the Peptidase S1 domain. A disordered region spans residues 1–20 (IVGGTEVTPGEIPYQLSLQD).

It belongs to the peptidase S1 family.

It carries out the reaction Hydrolysis of proteins, with broad specificity for peptide bonds. Native collagen is cleaved about 75% of the length of the molecule from the N-terminus. Low activity on small molecule substrates of both trypsin and chymotrypsin.. Functionally, this enzyme is a serine protease capable of degrading the native triple helix of collagen. This is Collagenolytic protease 36 kDa A from Paralithodes camtschaticus (Red king crab).